Reading from the N-terminus, the 576-residue chain is Proline--tRNA ligase (576 aa).

It belongs to the class-II aminoacyl-tRNA synthetase family. ProS type 1 subfamily. In terms of assembly, homodimer.

The protein localises to the cytoplasm. It carries out the reaction tRNA(Pro) + L-proline + ATP = L-prolyl-tRNA(Pro) + AMP + diphosphate. In terms of biological role, catalyzes the attachment of proline to tRNA(Pro) in a two-step reaction: proline is first activated by ATP to form Pro-AMP and then transferred to the acceptor end of tRNA(Pro). As ProRS can inadvertently accommodate and process non-cognate amino acids such as alanine and cysteine, to avoid such errors it has two additional distinct editing activities against alanine. One activity is designated as 'pretransfer' editing and involves the tRNA(Pro)-independent hydrolysis of activated Ala-AMP. The other activity is designated 'posttransfer' editing and involves deacylation of mischarged Ala-tRNA(Pro). The misacylated Cys-tRNA(Pro) is not edited by ProRS. This is Proline--tRNA ligase from Bordetella pertussis (strain Tohama I / ATCC BAA-589 / NCTC 13251).